The primary structure comprises 351 residues: Fe(3+) ions import ATP-binding protein FbpC (351 aa).

In terms of domain architecture, ABC transporter spans V7 to M237. G39–T46 provides a ligand contact to ATP.

It belongs to the ABC transporter superfamily. Fe(3+) ion importer (TC 3.A.1.10) family. The complex is composed of two ATP-binding proteins (FbpC), two transmembrane proteins (FbpB) and a solute-binding protein (FbpA).

The protein resides in the cell inner membrane. The enzyme catalyses Fe(3+)(out) + ATP + H2O = Fe(3+)(in) + ADP + phosphate + H(+). Its function is as follows. Part of the ABC transporter complex FbpABC involved in Fe(3+) ions import. Responsible for energy coupling to the transport system. This chain is Fe(3+) ions import ATP-binding protein FbpC, found in Photobacterium profundum (strain SS9).